Reading from the N-terminus, the 888-residue chain is Lon protease homolog 2, peroxisomal (888 aa).

A Lon N-terminal domain is found at 11 to 255; the sequence is LAILPFRNKV…KATELVDRHL (245 aa). 408 to 415 is an ATP binding site; the sequence is GPPGVGKT. The Lon proteolytic domain maps to 692 to 877; sequence VASAGVSVGL…EDVLENAFEG (186 aa). Active-site residues include Ser-783 and Lys-826. Positions 886–888 match the Microbody targeting signal motif; sequence SKL.

This sequence belongs to the peptidase S16 family.

The protein resides in the peroxisome matrix. It catalyses the reaction Hydrolysis of proteins in presence of ATP.. ATP-dependent serine protease that mediates the selective degradation of misfolded and unassembled polypeptides in the peroxisomal matrix. Necessary for type 2 peroxisome targeting signal (PTS2)-containing protein processing and facilitates peroxisome matrix protein import. This Arabidopsis thaliana (Mouse-ear cress) protein is Lon protease homolog 2, peroxisomal (LON2).